Consider the following 523-residue polypeptide: Arylsulfatase K (523 aa).

Residues 1-16 form the signal peptide; that stretch reads MLRVFVLLIFNVNAYC. Positions 35 and 75 each coordinate Ca(2+). Cys75 serves as the catalytic Nucleophile. At Cys75 the chain carries 3-oxoalanine (Cys). Asn103 is a glycosylation site (N-linked (GlcNAc...) asparagine). Residues Lys123 and His246 each contribute to the substrate site. Asn257 carries an N-linked (GlcNAc...) asparagine glycan. Ca(2+) contacts are provided by Asp308 and His309. N-linked (GlcNAc...) asparagine glycosylation is present at Asn405.

The protein belongs to the sulfatase family. It depends on Ca(2+) as a cofactor. In terms of processing, the conversion to 3-oxoalanine (also known as C-formylglycine, FGly), of a serine or cysteine residue in prokaryotes and of a cysteine residue in eukaryotes, is critical for catalytic activity.

Its subcellular location is the secreted. It is found in the lysosome. It carries out the reaction an aryl sulfate + H2O = a phenol + sulfate + H(+). The catalysed reaction is Hydrolysis of the 2-sulfate groups of the 2-O-sulfo-D-glucuronate residues of chondroitin sulfate, heparin and heparitin sulfate.. Catalyzes the hydrolysis of pseudosubstrates such as p-nitrocatechol sulfate and p-nitrophenyl sulfate. Catalyzes the hydrolysis of the 2-sulfate groups of the 2-O-sulfo-D-glucuronate residues of chondroitin sulfate, heparin and heparitin sulfate. Acts selectively on 2-sulfoglucuronate and lacks activity against 2-sulfoiduronate. The chain is Arylsulfatase K (arsk) from Danio rerio (Zebrafish).